The following is a 420-amino-acid chain: Gamma-glutamyl phosphate reductase (420 aa).

Belongs to the gamma-glutamyl phosphate reductase family.

It localises to the cytoplasm. The catalysed reaction is L-glutamate 5-semialdehyde + phosphate + NADP(+) = L-glutamyl 5-phosphate + NADPH + H(+). It functions in the pathway amino-acid biosynthesis; L-proline biosynthesis; L-glutamate 5-semialdehyde from L-glutamate: step 2/2. In terms of biological role, catalyzes the NADPH-dependent reduction of L-glutamate 5-phosphate into L-glutamate 5-semialdehyde and phosphate. The product spontaneously undergoes cyclization to form 1-pyrroline-5-carboxylate. The sequence is that of Gamma-glutamyl phosphate reductase from Streptococcus pneumoniae serotype 2 (strain D39 / NCTC 7466).